Consider the following 31-residue polypeptide: Dermaseptin-7.1TR (31 aa).

Q31 carries the glutamine amide modification.

In terms of tissue distribution, expressed by the skin glands.

The protein localises to the secreted. In terms of biological role, has antimicrobial activity. This is Dermaseptin-7.1TR from Phyllomedusa trinitatis (Trinidad leaf frog).